We begin with the raw amino-acid sequence, 644 residues long: SURP and G-patch domain-containing protein 1 (644 aa).

A compositionally biased stretch (basic and acidic residues) spans R44–A54. Disordered stretches follow at residues R44–Q74 and A98–L122. T128 bears the Phosphothreonine mark. An SURP motif 1 repeat occupies V188–Y230. The residue at position 253 (S253) is a Phosphoserine. The stretch at L263–Y306 is one SURP motif 2 repeat. 2 disordered regions span residues A316–L342 and P360–L412. Phosphoserine is present on S323. Residues P360–P369 are compositionally biased toward pro residues. A Nuclear localization signal motif is present at residues K379–R385. S408, S410, S413, and S484 each carry phosphoserine. Residues V561–P608 enclose the G-patch domain.

As to quaternary structure, component of the spliceosome.

It is found in the nucleus. Its function is as follows. Plays a role in pre-mRNA splicing. The polypeptide is SURP and G-patch domain-containing protein 1 (Sugp1) (Rattus norvegicus (Rat)).